We begin with the raw amino-acid sequence, 150 residues long: uncharacterized protein (150 aa).

4 helical membrane passes run 12 to 30 (IVQR…YFLF), 40 to 62 (RLLS…LVLF), 74 to 96 (IRRT…VLSG), and 106 to 128 (ALID…SRAV).

Its subcellular location is the cell membrane. This is an uncharacterized protein from Archaeoglobus fulgidus (strain ATCC 49558 / DSM 4304 / JCM 9628 / NBRC 100126 / VC-16).